We begin with the raw amino-acid sequence, 440 residues long: D-serine dehydratase (440 aa).

An N6-(pyridoxal phosphate)lysine modification is found at Lys-116.

This sequence belongs to the serine/threonine dehydratase family. DsdA subfamily. In terms of assembly, monomer. Pyridoxal 5'-phosphate is required as a cofactor.

It carries out the reaction D-serine = pyruvate + NH4(+). The chain is D-serine dehydratase from Salmonella schwarzengrund (strain CVM19633).